A 656-amino-acid chain; its full sequence is Exoribonuclease 2 (656 aa).

The RNB domain occupies 190–518; it reads RSDLTKTPFF…LNHRLIKSVL (329 aa). The region spanning 564–649 is the S1 motif domain; sequence KWRYKAEIFD…ESGQLIGKLA (86 aa).

Belongs to the RNR ribonuclease family. RNase II subfamily.

The protein resides in the cytoplasm. It catalyses the reaction Exonucleolytic cleavage in the 3'- to 5'-direction to yield nucleoside 5'-phosphates.. Its function is as follows. Involved in mRNA degradation. Hydrolyzes single-stranded polyribonucleotides processively in the 3' to 5' direction. This is Exoribonuclease 2 from Psychromonas ingrahamii (strain DSM 17664 / CCUG 51855 / 37).